The primary structure comprises 323 residues: Transposase for insertion sequence element IS6120 (323 aa).

Residues 300 to 323 are disordered; sequence ERPTDITPPTSPSDGGQHAGTEVA. A compositionally biased stretch (low complexity) spans 304–313; that stretch reads DITPPTSPSD.

This sequence belongs to the transposase mutator family.

Required for the transposition of the insertion element. The protein is Transposase for insertion sequence element IS6120 of Mycolicibacterium smegmatis (Mycobacterium smegmatis).